A 446-amino-acid chain; its full sequence is MANLVLSECGIRPLPRIYTTPRSNFLSNNNKFRPSLSSSSYKTSSSPLSFGLNSRDGFTRNWALNVSTPLTTPIFEESPLEEDNKQRFDPGAPPPFNLADIRAAIPKHCWVKNPWKSLSYVVRDVAIVFALAAGAAYLNNWIVWPLYWLAQGTMFWALFVLGHDCGHGSFSNDPKLNSVVGHLLHSSILVPYHGWRISHRTHHQNHGHVENDESWHPMSEKIYNTLDKPTRFFRFTLPLVMLAYPFYLWARSPGKKGSHYHPDSDLFLPKERKDVLTSTACWTAMAALLVCLNFTIGPIQMLKLYGIPYWINVMWLDFVTYLHHHGHEDKLPWYRGKEWSYLRGGLTTLDRDYGLINNIHHDIGTHVIHHLFPQIPHYHLVEATEAAKPVLGKYYREPDKSGPLPLHLLEILAKSIKEDHYVSDEGEVVYYKADPNLYGEVKVRAD.

A chloroplast-targeting transit peptide spans 1–65 (MANLVLSECG…DGFTRNWALN (65 aa)). 2 helical membrane passes run 118–138 (LSYV…AAYL) and 141–161 (WIVW…LFVL). Residues 163–167 (HDCGH) carry the Histidine box-1 motif. Positions 199 to 203 (HRTHH) match the Histidine box-2 motif. The next 3 membrane-spanning stretches (helical) occupy residues 231–250 (RFFR…YLWA), 279–299 (TACW…IGPI), and 302–322 (LKLY…VTYL). A Histidine box-3 motif is present at residues 366-370 (HVIHH).

Belongs to the fatty acid desaturase type 1 family. As to expression, most abundant in leaves and seedlings.

It localises to the plastid. The protein resides in the chloroplast inner membrane. It catalyses the reaction a (7Z,10Z)-hexadecadienoyl-containing glycerolipid + 2 reduced [2Fe-2S]-[ferredoxin] + O2 + 2 H(+) = a (7Z,10Z,13Z)-hexadecatrienoyl-containing glycerolipid + 2 oxidized [2Fe-2S]-[ferredoxin] + 2 H2O. It carries out the reaction a (9Z,12Z)-octadecadienoyl-containing glycerolipid + 2 reduced [2Fe-2S]-[ferredoxin] + O2 + 2 H(+) = (9Z,12Z,15Z)-octadecatrienoyl-containing glycerolipid + 2 oxidized [2Fe-2S]-[ferredoxin] + 2 H2O. It participates in lipid metabolism; polyunsaturated fatty acid biosynthesis. Its function is as follows. Chloroplast omega-3 fatty acid desaturase introduces the third double bond in the biosynthesis of 16:3 and 18:3 fatty acids, important constituents of plant membranes. It is thought to use ferredoxin as an electron donor and to act on fatty acids esterified to galactolipids, sulfolipids and phosphatidylglycerol. The chain is sn-2 acyl-lipid omega-3 desaturase (ferredoxin), chloroplastic from Arabidopsis thaliana (Mouse-ear cress).